A 202-amino-acid chain; its full sequence is D-alanyl-D-alanine dipeptidase (202 aa).

Histidine 116 and aspartate 123 together coordinate Zn(2+). Glutamate 181 acts as the Proton donor/acceptor in catalysis. Histidine 184 contacts Zn(2+).

It belongs to the peptidase M15D family. In terms of assembly, homodimer. The cofactor is Zn(2+). Fe(2+) is required as a cofactor. Requires Co(2+) as cofactor. It depends on Ni(2+) as a cofactor.

It carries out the reaction D-alanyl-D-alanine + H2O = 2 D-alanine. Inhibited by aminoalkyl phosphinate analogs. In terms of biological role, catalyzes hydrolysis of the D-alanyl-D-alanine dipeptide. In Enterococcus faecium (Streptococcus faecium), this protein is D-alanyl-D-alanine dipeptidase (vanX).